The primary structure comprises 89 residues: Kunitz-type protease inhibitor 3 (89 aa).

The N-terminal stretch at 1 to 24 (MQLQASLSFLLILTLCLELRSELA) is a signal peptide. The region spanning 36-86 (CAFPMEKGPCQTYMTRWFFNFETGECELFAYGGCGGNSNNFLRKEKCEKFC) is the BPTI/Kunitz inhibitor domain. Cystine bridges form between C36/C86, C45/C69, and C61/C82.

The protein localises to the secreted. This is Kunitz-type protease inhibitor 3 (SPINT3) from Homo sapiens (Human).